The sequence spans 356 residues: Protein RecA (356 aa).

77 to 84 is an ATP binding site; sequence GPESSGKT.

The protein belongs to the RecA family.

The protein resides in the cytoplasm. Can catalyze the hydrolysis of ATP in the presence of single-stranded DNA, the ATP-dependent uptake of single-stranded DNA by duplex DNA, and the ATP-dependent hybridization of homologous single-stranded DNAs. It interacts with LexA causing its activation and leading to its autocatalytic cleavage. The polypeptide is Protein RecA (Caulobacter sp. (strain K31)).